We begin with the raw amino-acid sequence, 203 residues long: Small ribosomal subunit protein uS4 (203 aa).

In terms of domain architecture, S4 RNA-binding spans 93–173; that stretch reads RRFDNVVFRS…IPSWIQVDKA (81 aa).

This sequence belongs to the universal ribosomal protein uS4 family. Part of the 30S ribosomal subunit. Contacts protein S5. The interaction surface between S4 and S5 is involved in control of translational fidelity.

Functionally, one of the primary rRNA binding proteins, it binds directly to 16S rRNA where it nucleates assembly of the body of the 30S subunit. With S5 and S12 plays an important role in translational accuracy. This is Small ribosomal subunit protein uS4 from Chlorobium phaeobacteroides (strain DSM 266 / SMG 266 / 2430).